Reading from the N-terminus, the 330-residue chain is Membrane-associated protein VIPP1, chloroplastic (330 aa).

The transit peptide at 1–64 (MALKASPVTG…LRLACDNRLR (64 aa)) directs the protein to the chloroplast. Coiled-coil stretches lie at residues 124-259 (SQKQ…LTQI) and 312-329 (KDSEIENELNELRRKAND). A disordered region spans residues 287–312 (LSGSSKKGELPPGRSTVAASTRYPFK).

It belongs to the PspA/Vipp/IM30 family. In terms of assembly, homomultimer. Complex formation involves interaction via the central alpha-helical domain (71-286).

Its subcellular location is the plastid. The protein resides in the chloroplast inner membrane. The protein localises to the chloroplast thylakoid membrane. Its function is as follows. Required for plastid vesicle formation and thylakoid membrane biogenesis, but not for functional assembly of thylakoid protein complexes. The sequence is that of Membrane-associated protein VIPP1, chloroplastic from Arabidopsis thaliana (Mouse-ear cress).